The primary structure comprises 219 residues: DAN domain family member 5 (219 aa).

An N-terminal signal peptide occupies residues 1–19 (MLLFRAASLLPLLCFTVGA). Cystine bridges form between Cys-118–Cys-165, Cys-132–Cys-179, Cys-142–Cys-195, and Cys-146–Cys-197. Residues 118 to 198 (CHALPFIQNV…VELVEECECE (81 aa)) form the CTCK domain.

It belongs to the DAN family. Interacts with nr1-a.

The protein localises to the secreted. Functionally, plays an important role in regulating the left-right axis by blocking a tgfb1 cascade in the right posterior paraxial mesoderm. Functions as an inhibitor of bmp, tgfb1, nodal, activin and wnt signaling in the ectoderm. May inhibit mesodermal signals, probably through an inhibition of nodal/activin pathways. Seems to regulates cell fate specification and competence before the onset of neural induction. Expression in the entire ectodermal region prior to gastrulation might act to prevent fate specification in the ectoderm and ensure the maintenance of the stem-cell-like properties exhibited by ectodermal cells. This chain is DAN domain family member 5 (dand5), found in Xenopus tropicalis (Western clawed frog).